Consider the following 66-residue polypeptide: Large ribosomal subunit protein bL35 (66 aa).

A compositionally biased stretch (polar residues) spans Ala-18–Ser-27. A disordered region spans residues Ala-18–Ile-41. Over residues Ala-28 to Ile-41 the composition is skewed to basic residues.

This sequence belongs to the bacterial ribosomal protein bL35 family.

In Ehrlichia ruminantium (strain Gardel), this protein is Large ribosomal subunit protein bL35.